An 82-amino-acid polypeptide reads, in one-letter code: MPKRTLQGVVVSDKQAKTVVVRVDRRFTHPIYKKTIRRSKNYHAHDESNEFKPGDMVWIEESKPISKLKRWTVVRGEHKKTA.

The protein belongs to the universal ribosomal protein uS17 family. Part of the 30S ribosomal subunit.

In terms of biological role, one of the primary rRNA binding proteins, it binds specifically to the 5'-end of 16S ribosomal RNA. The protein is Small ribosomal subunit protein uS17 of Bradyrhizobium sp. (strain BTAi1 / ATCC BAA-1182).